Here is a 796-residue protein sequence, read N- to C-terminus: Histone acetyltransferase KAT2B (796 aa).

3 disordered regions span residues Met1–Ser32, Trp77–Pro97, and Ala371–Arg408. Residues Gly10–Pro24 show a composition bias toward low complexity. Pro residues predominate over residues Asn81–Ala94. A compositionally biased stretch (basic and acidic residues) spans Gly392–Arg408. Residues Leu469–Asn617 form the N-acetyltransferase domain. Glu536 acts as the Proton donor/acceptor in catalysis. Residues Cys540–Val542, Gln547–Thr553, and Tyr578–Gly581 each bind acetyl-CoA. Residues Lys687–Ala791 form the Bromo domain.

Belongs to the acetyltransferase family. GCN5 subfamily.

Its subcellular location is the nucleus. The protein resides in the cytoplasm. It localises to the cytoskeleton. It is found in the microtubule organizing center. The protein localises to the centrosome. The catalysed reaction is L-lysyl-[histone] + acetyl-CoA = N(6)-acetyl-L-lysyl-[histone] + CoA + H(+). It carries out the reaction L-lysyl-[protein] + acetyl-CoA = N(6)-acetyl-L-lysyl-[protein] + CoA + H(+). The enzyme catalyses spermidine + acetyl-CoA = N(8)-acetylspermidine + CoA + H(+). Functionally, functions as a histone acetyltransferase (HAT) to promote transcriptional activation. Has significant histone acetyltransferase activity with core histones (H3 and H4), and also with nucleosome core particles. Has a a strong preference for acetylation of H3 at 'Lys-9' (H3K9ac). Also acetylates non-histone proteins. Involved in heart and limb development by mediating acetylation of tbx5. Also acetylates spermidine. Together with kat2a, required for growth and differentiation of craniofacial cartilage and bone by regulating acetylation of histone H3 at 'Lys-9' (H3K9ac). The polypeptide is Histone acetyltransferase KAT2B (Danio rerio (Zebrafish)).